Reading from the N-terminus, the 930-residue chain is MEYERRGGRGDRTGRYGATDRSQDDGGENRSRDHDYRDMDYRSYPREYGSQEGKHDYDDSSEEQSAEDSYEASPGSETQRRRRRRHRHSPTGPPGFPRDGDYRDQDYRTEQGEEEEEEEDEEEEEKASNIVMLRMLPQAATEDDIRGQLQSHGVQAREVRLMRNKSSGQSRGFAFVEFSHLQDATRWMEANQHSLNILGQKVSMHYSDPKPKINEDWLCNKCGVQNFKRREKCFKCGVPKSEAEQKLPLGTRLDQQTLPLGGRELSQGLLPLPQPYQAQGVLASQALSQGSEPSSENANDTIILRNLNPHSTMDSILGALAPYAVLSSSNVRVIKDKQTQLNRGFAFIQLSTIVEAAQLLQILQALHPPLTIDGKTINVEFAKGSKRDMASNEGSRISAASVASTAIAAAQWAISQASQGGEGTWATSEEPPVDYSYYQQDEGYGNSQGTESSLYAHGYLKGTKGPGITGTKGDPTGAGPEASLEPGADSVSMQAFSRAQPGAAPGIYQQSAEASSSQGTAANSQSYTIMSPAVLKSELQSPTHPSSALPPATSPTAQESYSQYPVPDVSTYQYDETSGYYYDPQTGLYYDPNSQYYYNAQSQQYLYWDGERRTYVPALEQSADGHKETGAPSKEGKEKKEKHKTKTAQQIAKDMERWARSLNKQKENFKNSFQPISSLRDDERRESATADAGYAILEKKGALAERQHTSMDLPKLASDDRPSPPRGLVAAYSGESDSEEEQERGGPEREEKLTDWQKLACLLCRRQFPSKEALIRHQQLSGLHKQNLEIHRRAHLSENELEALEKNDMEQMKYRDRAAERREKYGIPEPPEPKRRKYGGISTASVDFEQPTRDGLGSDNIGSRMLQAMGWKEGSGLGRKKQGIVTPIEAQTRVRGSGLGARGSSYGVTSTESYKETLHKTMVTRFNEAQ.

2 stretches are compositionally biased toward basic and acidic residues: residues 1 to 14 (MEYE…DRTG) and 21 to 45 (RSQD…RSYP). A disordered region spans residues 1–127 (MEYERRGGRG…EEDEEEEEKA (127 aa)). E2 carries the N-acetylserine modification. Residues R30, S61, and S89 each carry the phosphoserine modification. A compositionally biased stretch (acidic residues) spans 59–70 (DSSEEQSAEDSY). A compositionally biased stretch (basic residues) spans 80 to 89 (RRRRRRHRHS). Residues 98–111 (RDGDYRDQDYRTEQ) are compositionally biased toward basic and acidic residues. Over residues 112-125 (GEEEEEEEDEEEEE) the composition is skewed to acidic residues. The region spanning 129–209 (NIVMLRMLPQ…QKVSMHYSDP (81 aa)) is the RRM 1 domain. The segment at 212–242 (KINEDWLCNKCGVQNFKRREKCFKCGVPKSE) adopts a RanBP2-type zinc-finger fold. The RRM 2 domain maps to 300–384 (DTIILRNLNP…KTINVEFAKG (85 aa)). N6-acetyllysine is present on K383. 4 disordered regions span residues 466–524 (PGIT…AANS), 537–569 (SELQ…VPDV), 620–685 (EQSA…DERR), and 700–753 (KGAL…EEKL). The span at 508-524 (YQQSAEASSSQGTAANS) shows a compositional bias: polar residues. Residues 541 to 557 (SPTHPSSALPPATSPTA) show a composition bias toward low complexity. 3 stretches are compositionally biased toward basic and acidic residues: residues 623 to 639 (ADGH…GKEK), 653 to 669 (KDME…KENF), and 700 to 709 (KGALAERQHT). 5 positions are modified to phosphoserine: S718, S723, S733, S736, and S738. Basic and acidic residues predominate over residues 743–753 (ERGGPEREEKL). The C2H2-type; atypical zinc-finger motif lies at 759 to 784 (LACLLCRRQFPSKEALIRHQQLSGLH). Phosphoserine is present on residues S781 and S797. Residues 815 to 826 (RDRAAERREKYG) show a composition bias toward basic and acidic residues. The interval 815-861 (RDRAAERREKYGIPEPPEPKRRKYGGISTASVDFEQPTRDGLGSDNI) is disordered. S845 carries the phosphoserine modification. Positions 858–904 (SDNIGSRMLQAMGWKEGSGLGRKKQGIVTPIEAQTRVRGSGLGARGS) constitute a G-patch domain. Omega-N-methylarginine is present on R902.

Associates with the spliceosome. Component of a large chromatin remodeling complex, at least composed of MYSM1, PCAF, RBM10 and KIF11/TRIP5.

It is found in the nucleus. Binds to ssRNA containing the consensus sequence 5'-AGGUAA-3'. May be involved in post-transcriptional processing, most probably in mRNA splicing. Binds to RNA homopolymers, with a preference for poly(G) and poly(U) and little for poly(A). May bind to specific miRNA hairpins. The polypeptide is RNA-binding protein 10 (Homo sapiens (Human)).